Reading from the N-terminus, the 544-residue chain is Chaperonin GroEL (544 aa).

ATP is bound by residues 29–32 (TMGP), Lys-50, 86–90 (DGTTT), Gly-414, 477–479 (NAA), and Asp-493. Positions 525 to 544 (DKPAMPSMPDMGGMGMPGMM) are disordered.

It belongs to the chaperonin (HSP60) family. In terms of assembly, forms a cylinder of 14 subunits composed of two heptameric rings stacked back-to-back. Interacts with the co-chaperonin GroES.

Its subcellular location is the cytoplasm. The enzyme catalyses ATP + H2O + a folded polypeptide = ADP + phosphate + an unfolded polypeptide.. Functionally, together with its co-chaperonin GroES, plays an essential role in assisting protein folding. The GroEL-GroES system forms a nano-cage that allows encapsulation of the non-native substrate proteins and provides a physical environment optimized to promote and accelerate protein folding. This is Chaperonin GroEL from Aliarcobacter butzleri (strain RM4018) (Arcobacter butzleri).